We begin with the raw amino-acid sequence, 591 residues long: ADP-ribosylating toxin CARDS (591 aa).

Residues 1-205 (MPNPVRFVYR…LPTPGIATPV (205 aa)) are mono-ADP ribosyltransferase (mART) domain. The tract at residues 206 to 256 (HLSIPQAASVADVSEGTSASLSFACPDWSPPSSNGENPLDKCIAEKIDNYN) is NAD(+)-binding pocket. A disulfide bridge connects residues Cys230 and Cys247. The KELED motif, involved in host ER trafficking, solvent exposed in the crystal structure signature appears at 268–272 (KELED). The segment at 273-439 (TPVYLRGIKT…QFVTMRAAST (167 aa)) is D2 domain. The D3 domain stretch occupies residues 440–591 (FFVDVQLGWY…ILVKDGFDRF (152 aa)).

This sequence belongs to the bacterial exotoxin subunit A family. Monomer. Binds to host (human) pulmonary surfactant-associated protein A1 (SFTPA1), the major mammalian protein component of pulmonary surfactant. Binds to host (human) surface annexin A2 (ANXA2) on the cell surface; anti-ANXA2 antibodies decrease binding to cells. Interacts with cytosolic host (human) NLRP3, which it ADP-ribosylates in vitro. Post-translationally, 8 hours after treatment of HeLa cells with purified protein, a substantial amount is processed to 2 nearly equal-sized fragments. The disulfide bond between Cys-230 and Cys-247 is required to for the toxin to exert its mART and vacuolating activities within target cells, and for protein processing. Acidic pH in the endosome and retrograde transport are required for toxin cleavage, which is required for both toxin activities. Trypsin treatment under mild conditions leads to cleavage at Lys-305 and Lys-307; the 2 proteins fragments remain associated and can be internalized and vacuolate HeLa cells.

It is found in the cell membrane. The protein localises to the cytoplasm. Its subcellular location is the cell surface. It localises to the cell projection. The protein resides in the attachment organelle. It is found in the host cytoplasm. The protein localises to the host cytosol. Its subcellular location is the host endoplasmic reticulum. With respect to regulation, in vitro ADP-ribosylation is enhanced by dithiotheritol. Functionally, the main virulence factor for this bacteria, a mono-ADP-ribosylating toxin (mART), that transfers the ADP-ribosyl group from NAD(+) to multiple target proteins in vitro. Also elicits cytopathic effects in mammalian cells, such as disorganization and disruption of respiratory epithelial integrity in tracheal epithelium and vacuolization in the cytoplasm of CHO and HeLa cells as well as in mice and baboons. Treatment of mice or baboons with CARDS elicits a response that is consistent with human M.pneumoniae infections and mouse models of both infection and intoxication, suggesting that CARDS toxin is sufficient to cause prolonged inflammatory responses and airway dysfunction. Treatment of baboons with CARDS induces a number of cytokines; G-CSF (40 fold), IL-1Ra (10 fold), IL-6 and IL-8 (333 and 100 fold, respectively), MIP-1a (5 fold), and RANTES (9 fold). Treatment of mice gives a similar response. Binds phosphatidyl choline, dipalmitoylphosphatidylcholine (DPPC) and sphingomyelin via domains D2 plus D3. In terms of biological role, has at least 2 host receptors SFTPA1 and ANXA2. Internalized by a clathrin-mediated process; protein is rapidly taken up at 37 degrees Celsius. Clathrin-independent or caveolin-dependent endocytosis were not detected. In HeLa cells internalized CARDS trafficks toward the nucleus by retrograde transport from early to late endosomes, then the Golgi apparatus; at 16 hours most toxin is concentrated in the perinuclear region in the host endoplasmic reticulum (ER). Failure to localize to the host ER prevents ADP-ribosylation and vacuolization. An acidic compartment is required to mediate retrotransport and processing of toxin into an N-terminal fragment with mART activity and a C-terminal fragment that is able to induce vacuolization. Its function is as follows. Induces the host NLRP3 inflammasome to release interleukin-1 beta (IL-1 beta); IL-1 beta release requires ADP-ribosylation activity and uptake by host macrophages. In the host colocalizes with the NLRP3 inflammasome; ADP-ribosylates NLRP3 in vitro. ADP-ribosylation of NLRP3 may lead to hyperinflammation. The protein is ADP-ribosylating toxin CARDS of Mycoplasma pneumoniae (strain ATCC 29342 / M129 / Subtype 1) (Mycoplasmoides pneumoniae).